A 95-amino-acid chain; its full sequence is MSYQKHQQKWQLPAKCLPKYPSKWTPQAPASCPAPCPPPAPSCCVSSCCISGFGGHCSLVSLRFPRFYLRQPQHSDCCEHESSRCSTCYSSGDCS.

Belongs to the LCE family.

Its function is as follows. Precursors of the cornified envelope of the stratum corneum. The protein is Late cornified envelope protein 7A of Homo sapiens (Human).